We begin with the raw amino-acid sequence, 442 residues long: MFS transporter asaE (442 aa).

The segment covering 1–10 (MDRSRTSSQG) has biased composition (polar residues). Positions 1-43 (MDRSRTSSQGRDVLPPRGDEGRISPSLDKEKSPGPEDQPDAPP) are disordered. Residues 17 to 34 (RGDEGRISPSLDKEKSPG) show a composition bias toward basic and acidic residues. 12 helical membrane-spanning segments follow: residues 47–67 (LTAW…FGWV), 89–109 (TISW…PIVG), 119–139 (YLII…SIST), 150–170 (ICSA…VSAW), 177–197 (IAFA…PIMV), 206–226 (FGWS…IAIV), 252–272 (PVFI…FIPI), 288–307 (LASY…RLGA), 319–339 (IFIV…IPAT), 342–362 (APII…VSLS), 381–401 (LLFL…GAIL), and 413–433 (IFSG…RIVG).

The protein belongs to the major facilitator superfamily. Monocarboxylate porter (TC 2.A.1.13) family.

Its subcellular location is the cell membrane. It functions in the pathway secondary metabolite biosynthesis. Its function is as follows. MFS transporter; part of the gene cluster that mediates the biosynthesis of aspergillic acid. Probably involved in aspergillic acid metabolism and transport. The chain is MFS transporter asaE from Aspergillus flavus (strain ATCC 200026 / FGSC A1120 / IAM 13836 / NRRL 3357 / JCM 12722 / SRRC 167).